The primary structure comprises 359 residues: Type-1 angiotensin II receptor (359 aa).

Residues 1–25 (MILNSSTEDSIKRIQDDCPKAGRHN) lie on the Extracellular side of the membrane. The N-linked (GlcNAc...) asparagine glycan is linked to N4. Residues Q15 and D17 each coordinate angiotensin II. 2 disulfide bridges follow: C18/C274 and C101/C180. A helical transmembrane segment spans residues 26–55 (YIFVMIPTLYSIIFVVGIFGNSLVVIVIYF). At 56–61 (YMKLKT) the chain is on the cytoplasmic side. The chain crosses the membrane as a helical span at residues 62-89 (VASVFLLNLALADLCFLLTLPLWAVYTA). Topologically, residues 90–98 (MEYRWPFGN) are extracellular. A helical membrane pass occupies residues 99–125 (YLCKIASASVSFNLYASVFLLTCLSID). Over 126-141 (RYLAIVHPMKSRLRRT) the chain is Cytoplasmic. The helical transmembrane segment at 142–165 (MLVAKVTCIIIWLLAGLASLPTII) threads the bilayer. At 166-190 (HRNVFFIENTNITVCAFHYESQNST) the chain is on the extracellular side. R167 lines the angiotensin II pocket. N176 carries an N-linked (GlcNAc...) asparagine glycan. F182, H183, and Y184 together coordinate angiotensin II. Residue N188 is glycosylated (N-linked (GlcNAc...) asparagine). The chain crosses the membrane as a helical span at residues 191 to 216 (LPVGLGLTKNILGFLFPFLIILTSYT). K199 contacts angiotensin II. Over 217 to 239 (LIWKALKKAYEIQKNKPRNDDIF) the chain is Cytoplasmic. The helical transmembrane segment at 240 to 268 (KIIMAIVLFFFFSWVPHQIFTFLDVLIQL) threads the bilayer. Topologically, residues 269-278 (GIIHDCKIAD) are extracellular. The chain crosses the membrane as a helical span at residues 279–304 (IVDTAMPITICLAYFNNCLNPLFYGF). Over 305–359 (LGKKFKKYFLQLLKYIPPKAKSHSSLSTKMSTLSYRPSENGSSSTKKSAPCTEVE) the chain is Cytoplasmic. A disordered region spans residues 326–359 (SHSSLSTKMSTLSYRPSENGSSSTKKSAPCTEVE). Residues 327 to 351 (HSSLSTKMSTLSYRPSENGSSSTKK) show a composition bias toward polar residues. A lipid anchor (S-palmitoyl cysteine) is attached at C355.

Belongs to the G-protein coupled receptor 1 family. In terms of assembly, interacts with MAS1. Interacts with ARRB1. Interacts with FLNA (via filamin repeat 21); increases PKA-mediated phosphorylation of FLNA. C-terminal Ser or Thr residues may be phosphorylated.

The protein localises to the cell membrane. Functionally, receptor for angiotensin II, a vasoconstricting peptide, which acts as a key regulator of blood pressure and sodium retention by the kidney. The activated receptor in turn couples to G-alpha proteins G(q) (GNAQ, GNA11, GNA14 or GNA15) and thus activates phospholipase C and increases the cytosolic Ca(2+) concentrations, which in turn triggers cellular responses such as stimulation of protein kinase C. This chain is Type-1 angiotensin II receptor (AGTR1), found in Sus scrofa (Pig).